A 316-amino-acid polypeptide reads, in one-letter code: Transcription initiation factor IIB (316 aa).

Residues 7 to 38 (FRLRCPVCGSTDIVFNEETGEYVCARCGTIVL) form a TFIIB-type zinc finger. Residues Cys-11, Cys-14, Cys-30, and Cys-33 each coordinate Zn(2+). Residues 51 to 73 (FTPEERERRGRTGAPLSPTLHDH) form a disordered region. Tandem repeats lie at residues 124–207 (NELD…TKEL) and 218–299 (DHIP…EIMK).

Belongs to the TFIIB family.

Functionally, stabilizes TBP binding to an archaeal box-A promoter. Also responsible for recruiting RNA polymerase II to the pre-initiation complex (DNA-TBP-TFIIB). This is Transcription initiation factor IIB from Ignicoccus hospitalis (strain KIN4/I / DSM 18386 / JCM 14125).